The sequence spans 314 residues: Pyridoxal 5'-phosphate synthase-like subunit PDX1.2 (314 aa).

A2 is modified (N-acetylalanine).

Belongs to the PdxS/SNZ family. As to quaternary structure, homodimer or heterodimer with PDX1.1 or PDX1.3. No interaction with PDX2. Expressed in callus tissues, flowers and roots. Weakly expressed in leaves and stems.

The protein localises to the cytoplasm. The protein has no function in the formation of pyridoxal 5'-phosphate. The polypeptide is Pyridoxal 5'-phosphate synthase-like subunit PDX1.2 (PDX12) (Arabidopsis thaliana (Mouse-ear cress)).